The primary structure comprises 443 residues: uncharacterized protein (443 aa).

10 helical membrane-spanning segments follow: residues 7-29, 68-87, 94-111, 121-143, 150-164, 179-201, 206-225, 358-375, 382-399, and 409-431; these read VSLY…MLNT, YISS…SIFT, VLSL…YAIF, VTLF…SMFA, IVII…SLTC, IIST…YIFF, LIIK…FAIS, IRFI…FIRN, LFVV…SFFG, and LFGM…IYKI.

Its subcellular location is the cell membrane. This is an uncharacterized protein from Escherichia coli (strain K12).